The following is a 164-amino-acid chain: Glutamate uptake regulatory protein (164 aa).

Positions 5 to 66 constitute an HTH asnC-type domain; that stretch reads LDDFDIKILD…LLDPQKIGLG (62 aa). The H-T-H motif DNA-binding region spans 24-43; that stretch reads MAELSEKTGLSANACWRRIR.

Represses the secondary, H(+)-coupled glutamate uptake system (Gluemp) genes. This is Glutamate uptake regulatory protein (grp) from Zymomonas mobilis subsp. mobilis (strain ATCC 31821 / ZM4 / CP4).